We begin with the raw amino-acid sequence, 498 residues long: ATP synthase subunit beta, chloroplastic (498 aa).

172-179 (GGAGVGKT) contacts ATP.

The protein belongs to the ATPase alpha/beta chains family. In terms of assembly, F-type ATPases have 2 components, CF(1) - the catalytic core - and CF(0) - the membrane proton channel. CF(1) has five subunits: alpha(3), beta(3), gamma(1), delta(1), epsilon(1). CF(0) has four main subunits: a(1), b(1), b'(1) and c(9-12).

The protein resides in the plastid. The protein localises to the chloroplast thylakoid membrane. It carries out the reaction ATP + H2O + 4 H(+)(in) = ADP + phosphate + 5 H(+)(out). Produces ATP from ADP in the presence of a proton gradient across the membrane. The catalytic sites are hosted primarily by the beta subunits. The polypeptide is ATP synthase subunit beta, chloroplastic (Nicotiana tomentosiformis (Tobacco)).